The primary structure comprises 175 residues: uncharacterized protein (175 aa).

The transit peptide at 1 to 11 (METWRKGSFRN) directs the protein to the mitochondrion. The interval 29 to 48 (QGSILSQASTAGGDHEEYSN) is disordered.

Its subcellular location is the mitochondrion. This is an uncharacterized protein from Mus musculus (Mouse).